The primary structure comprises 515 residues: 2-isopropylmalate synthase (515 aa).

The Pyruvate carboxyltransferase domain maps to 5–267; that stretch reads VIIFDTTLRD…HTSLKNDEIH (263 aa). Mn(2+) contacts are provided by Asp-14, His-202, His-204, and Asn-238. The segment at 392-515 is regulatory domain; it reads KLNYLSVQSG…EIKQNKITTV (124 aa).

The protein belongs to the alpha-IPM synthase/homocitrate synthase family. LeuA type 1 subfamily. In terms of assembly, homodimer. Mn(2+) serves as cofactor.

Its subcellular location is the cytoplasm. It carries out the reaction 3-methyl-2-oxobutanoate + acetyl-CoA + H2O = (2S)-2-isopropylmalate + CoA + H(+). The protein operates within amino-acid biosynthesis; L-leucine biosynthesis; L-leucine from 3-methyl-2-oxobutanoate: step 1/4. Catalyzes the condensation of the acetyl group of acetyl-CoA with 3-methyl-2-oxobutanoate (2-ketoisovalerate) to form 3-carboxy-3-hydroxy-4-methylpentanoate (2-isopropylmalate). This Aliivibrio salmonicida (strain LFI1238) (Vibrio salmonicida (strain LFI1238)) protein is 2-isopropylmalate synthase.